Consider the following 327-residue polypeptide: tRNA N6-adenosine threonylcarbamoyltransferase (327 aa).

Fe cation is bound by residues His109 and His113. Substrate contacts are provided by residues 132-136 (MVSGG), Asp165, Gly178, Asp182, and Asn268. Fe cation is bound at residue Asp296.

It belongs to the KAE1 / TsaD family. It depends on Fe(2+) as a cofactor.

Its subcellular location is the cytoplasm. The enzyme catalyses L-threonylcarbamoyladenylate + adenosine(37) in tRNA = N(6)-L-threonylcarbamoyladenosine(37) in tRNA + AMP + H(+). In terms of biological role, required for the formation of a threonylcarbamoyl group on adenosine at position 37 (t(6)A37) in tRNAs that read codons beginning with adenine. Is involved in the transfer of the threonylcarbamoyl moiety of threonylcarbamoyl-AMP (TC-AMP) to the N6 group of A37, together with TsaE and TsaB. TsaD likely plays a direct catalytic role in this reaction. The protein is tRNA N6-adenosine threonylcarbamoyltransferase of Thermotoga neapolitana (strain ATCC 49049 / DSM 4359 / NBRC 107923 / NS-E).